The sequence spans 293 residues: Transcription elongation factor S-II (293 aa).

The 78-residue stretch at 4-81 (ADIRSAKAAL…KKWKADVSKG (78 aa)) folds into the TFIIS N-terminal domain. A disordered region spans residues 81–123 (GRPLKTTTTTSSTPSKHADVGSQAQKQVQKQSSSGQRTFKSDN). Low complexity predominate over residues 100-116 (VGSQAQKQVQKQSSSGQ). The 116-residue stretch at 133–248 (IRNNCIGLMY…HAQGAKPQKA (116 aa)) folds into the TFIIS central domain. Residues 251–291 (DLFTCGKCKQKKVSYYQMQTRSADEPMTTFCECTVCGNRWK) form a TFIIS-type zinc finger. Cys255, Cys258, Cys283, and Cys286 together coordinate Zn(2+).

This sequence belongs to the TFS-II family.

The protein resides in the nucleus. Functionally, necessary for efficient RNA polymerase II transcription elongation past template-encoded arresting sites. The arresting sites in DNA have the property of trapping a certain fraction of elongating RNA polymerases that pass through, resulting in locked ternary complexes. Cleavage of the nascent transcript by S-II allows the resumption of elongation from the new 3'-terminus. This chain is Transcription elongation factor S-II (tfs1), found in Schizosaccharomyces pombe (strain 972 / ATCC 24843) (Fission yeast).